The primary structure comprises 320 residues: dTDP-glucose 4,6-dehydratase (320 aa).

NAD(+) contacts are provided by residues 11 to 12 (FI), 38 to 41 (DKLG), 64 to 65 (DI), 84 to 88 (FAAET), and serine 103. Threonine 88 contacts substrate. Position 128 (threonine 128) interacts with substrate. The Proton donor role is filled by aspartate 129. Catalysis depends on proton acceptor residues glutamate 130 and tyrosine 152. 152–156 (YAASK) contacts NAD(+). Residue asparagine 181 coordinates substrate. Asparagine 182 provides a ligand contact to NAD(+). Substrate-binding positions include 191–192 (KM), 207–209 (PVY), arginine 216, asparagine 251, and 274–278 (DRKGH).

The protein belongs to the NAD(P)-dependent epimerase/dehydratase family. dTDP-glucose dehydratase subfamily. As to quaternary structure, homodimer. It depends on NAD(+) as a cofactor.

The enzyme catalyses dTDP-alpha-D-glucose = dTDP-4-dehydro-6-deoxy-alpha-D-glucose + H2O. Its function is as follows. Probably involved in the biosynthesis of the acarviose moiety of the alpha-glucosidase inhibitor acarbose. Catalyzes the dehydration of dTDP-D-glucose to form dTDP-6-deoxy-D-xylo-4-hexulose via a three-step process involving oxidation, dehydration and reduction. The polypeptide is dTDP-glucose 4,6-dehydratase (Actinoplanes sp. (strain ATCC 31044 / CBS 674.73 / SE50/110)).